We begin with the raw amino-acid sequence, 544 residues long: Chaperonin GroEL (544 aa).

Residues 29–32 (TMGP), Lys50, 86–90 (DGTTT), Gly414, 477–479 (NAV), and Asp493 each bind ATP.

The protein belongs to the chaperonin (HSP60) family. As to quaternary structure, forms a cylinder of 14 subunits composed of two heptameric rings stacked back-to-back. Interacts with the co-chaperonin GroES.

The protein resides in the cytoplasm. It carries out the reaction ATP + H2O + a folded polypeptide = ADP + phosphate + an unfolded polypeptide.. Its function is as follows. Together with its co-chaperonin GroES, plays an essential role in assisting protein folding. The GroEL-GroES system forms a nano-cage that allows encapsulation of the non-native substrate proteins and provides a physical environment optimized to promote and accelerate protein folding. In Campylobacter curvus (strain 525.92), this protein is Chaperonin GroEL.